The chain runs to 727 residues: Polyribonucleotide nucleotidyltransferase (727 aa).

Positions 488 and 494 each coordinate Mg(2+). Residues 555–614 (PKLYTMKINPEKIRDVIGKGGATIRALTDETGCQINIEEDGTITIAATEAAKADEAKRRI) form the KH domain. The S1 motif domain occupies 624-692 (GKIYEGPVTK…DKGRVKLSMK (69 aa)). A disordered region spans residues 691–727 (MKALADRPAGDSGRPAPAERGERRERRDGGASEQQQQ). A compositionally biased stretch (basic and acidic residues) spans 707–720 (PAERGERRERRDGG).

Belongs to the polyribonucleotide nucleotidyltransferase family. Mg(2+) serves as cofactor.

The protein localises to the cytoplasm. The enzyme catalyses RNA(n+1) + phosphate = RNA(n) + a ribonucleoside 5'-diphosphate. In terms of biological role, involved in mRNA degradation. Catalyzes the phosphorolysis of single-stranded polyribonucleotides processively in the 3'- to 5'-direction. The sequence is that of Polyribonucleotide nucleotidyltransferase from Acidovorax sp. (strain JS42).